The chain runs to 232 residues: Thiamine import ATP-binding protein ThiQ (232 aa).

The ABC transporter domain maps to 2–230 (LKLTDITWLY…KASASALLGI (229 aa)). Residue 32–39 (GPSGAGKS) participates in ATP binding.

The protein belongs to the ABC transporter superfamily. Thiamine importer (TC 3.A.1.19.1) family. In terms of assembly, the complex is composed of two ATP-binding proteins (ThiQ), two transmembrane proteins (ThiP) and a solute-binding protein (ThiB).

It localises to the cell inner membrane. The catalysed reaction is thiamine(out) + ATP + H2O = thiamine(in) + ADP + phosphate + H(+). Its function is as follows. Part of the ABC transporter complex ThiBPQ involved in thiamine import. Responsible for energy coupling to the transport system. In Escherichia coli O6:H1 (strain CFT073 / ATCC 700928 / UPEC), this protein is Thiamine import ATP-binding protein ThiQ.